The sequence spans 233 residues: 6-carboxyhexanoate--CoA ligase (233 aa).

The protein belongs to the BioW family. As to quaternary structure, homodimer. The cofactor is Mg(2+).

It catalyses the reaction heptanedioate + ATP + CoA = 6-carboxyhexanoyl-CoA + AMP + diphosphate. It participates in metabolic intermediate metabolism; pimeloyl-CoA biosynthesis; pimeloyl-CoA from pimelate: step 1/1. In terms of biological role, catalyzes the transformation of pimelate into pimeloyl-CoA with concomitant hydrolysis of ATP to AMP. The polypeptide is 6-carboxyhexanoate--CoA ligase (Methanocaldococcus sp. (strain FS406-22)).